Here is a 257-residue protein sequence, read N- to C-terminus: Type III pantothenate kinase (257 aa).

Residue 6-13 (EQGNTNTL) participates in ATP binding. Residue 107 to 110 (GADR) coordinates substrate. The active-site Proton acceptor is Asp109. Asp129 provides a ligand contact to K(+). Residue Thr132 participates in ATP binding. Residue Thr184 coordinates substrate.

It belongs to the type III pantothenate kinase family. In terms of assembly, homodimer. It depends on NH4(+) as a cofactor. K(+) serves as cofactor.

Its subcellular location is the cytoplasm. It carries out the reaction (R)-pantothenate + ATP = (R)-4'-phosphopantothenate + ADP + H(+). The protein operates within cofactor biosynthesis; coenzyme A biosynthesis; CoA from (R)-pantothenate: step 1/5. Catalyzes the phosphorylation of pantothenate (Pan), the first step in CoA biosynthesis. This Phenylobacterium zucineum (strain HLK1) protein is Type III pantothenate kinase.